The sequence spans 77 residues: Exodeoxyribonuclease 7 small subunit (77 aa).

Belongs to the XseB family. As to quaternary structure, heterooligomer composed of large and small subunits.

Its subcellular location is the cytoplasm. The catalysed reaction is Exonucleolytic cleavage in either 5'- to 3'- or 3'- to 5'-direction to yield nucleoside 5'-phosphates.. Bidirectionally degrades single-stranded DNA into large acid-insoluble oligonucleotides, which are then degraded further into small acid-soluble oligonucleotides. This is Exodeoxyribonuclease 7 small subunit from Carboxydothermus hydrogenoformans (strain ATCC BAA-161 / DSM 6008 / Z-2901).